The following is a 387-amino-acid chain: Palmitoyltransferase ZDHHC16A (387 aa).

Transmembrane regions (helical) follow at residues 73 to 93 and 106 to 126; these read WFGM…VFIA and SPGW…MIVF. A DHHC domain is found at 150 to 200; it reads SVCKKCIIPKPARSHHCGICKTCILKMDHHCPWLNNCVGHFNHRYFFSFCL. The active-site S-palmitoyl cysteine intermediate is the Cys180. The next 3 helical transmembrane spans lie at 198-218, 236-256, and 281-301; these read FCLF…HLFI, GVPV…GVAG, and VIYM…LTLW.

Belongs to the DHHC palmitoyltransferase family. Expressed in the central nervous system (CNS). Expressed in the developing forebrain, and especially in the telencephalon.

The protein resides in the endoplasmic reticulum membrane. It catalyses the reaction L-cysteinyl-[protein] + hexadecanoyl-CoA = S-hexadecanoyl-L-cysteinyl-[protein] + CoA. In terms of biological role, palmitoyl acyltransferase that mediates palmitoylation of proteins and is required during embryonic heart development. Involved in the proliferation of neural stem cells by regulating the FGF/ERK pathway. Involved in the proliferation of neural stem cells by regulating the FGF/ERK pathway. This Danio rerio (Zebrafish) protein is Palmitoyltransferase ZDHHC16A.